Here is a 438-residue protein sequence, read N- to C-terminus: Ammonium transporter Rh type A (438 aa).

The Cytoplasmic portion of the chain corresponds to 1–4 (MRFK). A helical transmembrane segment spans residues 5–25 (FPLMAISLEVAMIVLFGLFVE). Topologically, residues 26 to 61 (YETPQNASQKNASHQNASQQGNTSSSAKKDQFFQLY) are extracellular. Residues N31, N36, N41, and N47 are each glycosylated (N-linked (GlcNAc...) asparagine). A helical membrane pass occupies residues 62-82 (PLFQDVHVMIFVGFGFLMTFL). Residues 83–86 (KKYG) lie on the Cytoplasmic side of the membrane. A helical membrane pass occupies residues 87–107 (FSGVGFNLFLAALGLQWGTIM). Topologically, residues 108–121 (QGLLHSHGKEFHFG) are extracellular. Residues 122-142 (IYNMINADFSTATVLISFGAV) form a helical membrane-spanning segment. The Cytoplasmic portion of the chain corresponds to 143-148 (LGKTSP). Residues 149–169 (IQMLIMTILEIAVFAGNEYLV) form a helical membrane-spanning segment. The Extracellular segment spans residues 170–178 (TELFEASDT). A helical transmembrane segment spans residues 179–199 (GASMTIHAFGAYFGLAVAGVL). At 200 to 218 (YRPGLRCEHPNDESVYHSD) the chain is on the cytoplasmic side. A helical membrane pass occupies residues 219-239 (LFAMIGTLFLWIFWPSFNSAI). The Extracellular portion of the chain corresponds to 240-249 (ADPGDHQYRA). A helical transmembrane segment spans residues 250 to 270 (IVNTYMSLAACVITAYALSSL). Residues 271 to 278 (VERRGRLD) lie on the Cytoplasmic side of the membrane. The helical transmembrane segment at 279–296 (MVHIQNATLAGGVAVGTC) threads the bilayer. The Extracellular portion of the chain corresponds to 297–300 (ADME). A helical membrane pass occupies residues 301–321 (IPLYAAMTIGSIAGIISVLGY). Residues 322 to 342 (KFFSPLLANKLMIHDTCGVHN) lie on the Cytoplasmic side of the membrane. A helical membrane pass occupies residues 343–363 (LHGLPGVFGGLASIVAISWGM). Topologically, residues 364-372 (STASMAMQA) are extracellular. A helical transmembrane segment spans residues 373–393 (AALGSSIGSAIVGGLLTGLIL). Residues 394 to 438 (KLPIWNQPPDEYCYDDSVSWKVPKFRELDNRFFQHANHNHVEHEV) are Cytoplasmic-facing.

This sequence belongs to the ammonium transporter (TC 2.A.49) family. Rh subfamily. Homodimer. Heterotrimer; a RHCE monomer interacts with a RHAG homodimer. Component of the ankyrin-1 complex in the erythrocyte, composed of ANK1, RHCE, RHAG, SLC4A1, EPB42, GYPA, GYPB and AQP1. Interacts with GYPB (via the N-terminal); this interaction bridges the (RHAG)2(RHCE) heterotrimer with the SLC4A1 Band 3 I dimer complexed with GYPA. Glycosylated.

The protein localises to the membrane. The enzyme catalyses methylamine(out) = methylamine(in). It carries out the reaction NH4(+)(in) = NH4(+)(out). The catalysed reaction is CO2(out) = CO2(in). Component of the ankyrin-1 complex, a multiprotein complex involved in the stability and shape of the erythrocyte membrane. Heterotrimer with RHCE (RHAG)2(RHCE), that transports ammonium and its related derivative methylammonium, in both neutral and ionic forms, across the erythrocyte membrane. The transport of NH4(+) is electrogenic and masks the NH3 transport. Also, may act as a CO2 channel. Moreover in erythrocyte, regulates RHD membrane expression and is associated with rhesus blood group antigen expression. The protein is Ammonium transporter Rh type A of Mus musculus (Mouse).